The chain runs to 120 residues: Large ribosomal subunit protein uL18 (120 aa).

The protein belongs to the universal ribosomal protein uL18 family. In terms of assembly, part of the 50S ribosomal subunit; part of the 5S rRNA/L5/L18/L25 subcomplex. Contacts the 5S and 23S rRNAs.

This is one of the proteins that bind and probably mediate the attachment of the 5S RNA into the large ribosomal subunit, where it forms part of the central protuberance. The chain is Large ribosomal subunit protein uL18 from Geobacillus thermodenitrificans (strain NG80-2).